A 242-amino-acid polypeptide reads, in one-letter code: MTEITDRYFNDVIARLSGLRDRLAAQMEKAADLIAAAARADRRVYVFGTGHSHMMAEELHYRAGGLAITVPILCGSIMLQDGAVASSHFERIEGAVRPILDRYGIRDGDVLVVVSNSGVNAAPIEAARYAREKGAAIIALTSVAYSNTIARGRTQLLSLADVVLDNDAPSGDAVLEIAGSALKVGPVSTALGVTILNAVFADVAARLVGEGDAPIYLSANMPGSGDINRSLVERYRDHNPHL.

The 185-residue stretch at 30 to 214 (AADLIAAAAR…ARLVGEGDAP (185 aa)) folds into the SIS domain.

It belongs to the UPF0309 family.

This is UPF0309 protein BAbS19_II03080 from Brucella abortus (strain S19).